The sequence spans 464 residues: Protein VAPYRIN-LIKE (464 aa).

The region spanning 3 to 124 (RLVKTEFNEV…RDAVITVILV (122 aa)) is the MSP domain. 9 ANK repeats span residues 153–182 (NLTNLMKPAVESGKVEYVTDLITAGGDVNF), 186–215 (NGKSLIPFAIRTGKLAVLKLLVANGCRIND), 217–246 (VDFVLHEAAIIDRVDVVKFLFESFCDELDV), 252–281 (EMMTPIHVSASEGHVSLIEFFVSIGGNANA), 285–314 (RRWTPLHHAASRNHLKAVEFLLENSDVKYA), 318–347 (NGKTAFEIASESGHTRLFGVLRWGDALLQA), 349–368 (RVDDVHALKKCLGEGAEVNR), 372–401 (NGWTPLHWASFKGRIKSVKVLLEHGAEVDS), and 405–435 (AGYTPLHCAAEAGHLQVALVLIAHGGCQTNL).

As to expression, expressed in roots.

Its subcellular location is the cytoplasm. The protein resides in the nucleus. It is found in the cell membrane. In terms of biological role, may be involved in arbuscular mycorrhizal (AM) symbiosis with AM fungi and in nitrogen-fixing rhizobial bacteria symbiosis leading to the formation of root nodules. The protein is Protein VAPYRIN-LIKE of Medicago truncatula (Barrel medic).